The primary structure comprises 332 residues: Iron-utilization periplasmic protein (332 aa).

Positions 1–23 (MQFKHFKLATLAAALAFSANSFA) are cleaved as a signal peptide. Fe cation contacts are provided by His32, Glu80, Tyr218, and Tyr219.

It belongs to the bacterial solute-binding protein 1 family. The complex is composed of two ATP-binding proteins (FbpC), two transmembrane proteins (FbpB) and a solute-binding protein (FbpA).

The protein localises to the periplasm. Its function is as follows. Part of the ABC transporter complex FbpABC (TC 3.A.1.10.1) involved in Fe(3+) ions import. This protein specifically binds Fe(3+) and is involved in its transmembrane transport. The sequence is that of Iron-utilization periplasmic protein (fbpA) from Haemophilus influenzae (strain ATCC 51907 / DSM 11121 / KW20 / Rd).